The sequence spans 129 residues: Small ribosomal subunit protein uS9 (129 aa).

Belongs to the universal ribosomal protein uS9 family.

The polypeptide is Small ribosomal subunit protein uS9 (Chlorobium luteolum (strain DSM 273 / BCRC 81028 / 2530) (Pelodictyon luteolum)).